The following is a 91-amino-acid chain: Large ribosomal subunit protein bL27 (91 aa).

Positions 1-22 (MAHKKGQGSSRNGRDSNPQYRG) are disordered. Residues 7–19 (QGSSRNGRDSNPQ) show a composition bias toward polar residues.

Belongs to the bacterial ribosomal protein bL27 family.

This Myxococcus xanthus (strain DK1622) protein is Large ribosomal subunit protein bL27.